Consider the following 402-residue polypeptide: Multidrug resistance protein MdtH (402 aa).

Over 1–12 (MSRVSQARNLGK) the chain is Cytoplasmic. Residues 13-33 (YFLLIDNMLVVLGFFVVFPLI) traverse the membrane as a helical segment. The Periplasmic segment spans residues 34–98 (SIRFVDQMGW…GFATMGIAHE (65 aa)). A helical transmembrane segment spans residues 99-116 (PWLLWFSCLLSGLGGTLF). The Cytoplasmic portion of the chain corresponds to 117–138 (DPPRSALVVKLIRPQQRGRFFS). A helical transmembrane segment spans residues 139 to 159 (LLMMQDSASAVIGALLGSWLL). The Periplasmic portion of the chain corresponds to 160-164 (QYDFR). Residues 165 to 185 (LVCATGPVLFVLCAAFNAWLL) traverse the membrane as a helical segment. Topologically, residues 186 to 213 (PAWKLSTVRTPVREGMTRVMRDKRFVTY) are cytoplasmic. A helical transmembrane segment spans residues 214–234 (VLTLAGYYMLAVQVMLMLPIM). Residues 235 to 243 (VNDVAGAPS) lie on the Periplasmic side of the membrane. A helical membrane pass occupies residues 244–264 (AVKWMYAIEACLSLTLLYPIA). At 265-276 (RWSEKHFRLEHR) the chain is on the cytoplasmic side. The chain crosses the membrane as a helical span at residues 277–297 (LMAGLLIMSLSMMPVGMVSGL). Over 298–299 (QQ) the chain is Periplasmic. The helical transmembrane segment at 300–320 (LFTLICLFYIGSIIAEPARET) threads the bilayer. At 321–339 (LSASLADARARGSYMGFSR) the chain is on the cytoplasmic side. A helical membrane pass occupies residues 340–360 (LGLAIGGAIGYIGGGWLFDLG). The Periplasmic segment spans residues 361 to 367 (KSAHQPE). A helical transmembrane segment spans residues 368 to 388 (LPWMMLGIIGIFTFLALGWQF). At 389 to 402 (SQKRAARRLLERDA) the chain is on the cytoplasmic side.

The protein belongs to the major facilitator superfamily. DHA1 family. MdtH (TC 2.A.1.2.21) subfamily.

Its subcellular location is the cell inner membrane. The chain is Multidrug resistance protein MdtH from Shigella flexneri serotype 5b (strain 8401).